Consider the following 161-residue polypeptide: Zinc metalloproteinase/disintegrin (161 aa).

Residues glutamate 1–histidine 72 form the Peptidase M12B domain. Residue histidine 12 participates in Zn(2+) binding. Residue glutamate 13 is part of the active site. Zn(2+)-binding residues include histidine 16 and histidine 22. Cystine bridges form between cysteine 27-cysteine 51 and cysteine 29-cysteine 34. The propeptide occupies leucine 73 to leucine 88. The Disintegrin domain maps to glutamate 89–alanine 161. Intrachain disulfides connect cysteine 94–cysteine 109, cysteine 96–cysteine 104, cysteine 103–cysteine 126, cysteine 117–cysteine 123, cysteine 122–cysteine 147, and cysteine 135–cysteine 154. The Cell attachment site motif lies at arginine 139–aspartate 141.

It belongs to the venom metalloproteinase (M12B) family. P-II subfamily. P-IIa sub-subfamily. In terms of assembly, monomer. As to expression, expressed by the venom gland.

The protein resides in the secreted. Functionally, impairs hemostasis in the envenomed animal. Disintegrin: inhibit platelet aggregation induced by ADP, thrombin, platelet-activating factor and collagen. Acts by inhibiting fibrinogen interaction with platelet receptors GPIIb/GPIIIa (ITGA2B/ITGB3). The sequence is that of Zinc metalloproteinase/disintegrin from Bothrops jararaca (Jararaca).